The sequence spans 421 residues: Probable G-protein coupled receptor 151 (421 aa).

Residues Met1–Ser44 are Extracellular-facing. Asn18 carries N-linked (GlcNAc...) asparagine glycosylation. A helical transmembrane segment spans residues Leu45 to Leu65. At His66–Ser74 the chain is on the cytoplasmic side. The chain crosses the membrane as a helical span at residues Met75–Ala95. Residues Pro96–His122 lie on the Extracellular side of the membrane. Cysteines 114 and 190 form a disulfide. A helical membrane pass occupies residues Met123–Ala143. The Cytoplasmic segment spans residues Ser144–Thr156. A helical membrane pass occupies residues Ile157–Phe177. Over Phe178–Leu204 the chain is Extracellular. Residues Phe205 to Phe225 form a helical membrane-spanning segment. The Cytoplasmic portion of the chain corresponds to Trp226–Thr258. The chain crosses the membrane as a helical span at residues Ala259–Leu279. Residues Lys280–Gly289 lie on the Extracellular side of the membrane. The helical transmembrane segment at Phe290–Leu310 threads the bilayer. Over Met311–Asn421 the chain is Cytoplasmic. Disordered regions lie at residues Ile346–Val381 and His394–Asn421. 2 stretches are compositionally biased toward basic and acidic residues: residues Asp364–Asp379 and Pro409–Asn421.

It belongs to the G-protein coupled receptor 1 family. Exclusively expressed in neurons of the habenular complex. The expression is particularly prominent in the medial habenular nucleus, whereas the lateral habenular nucleus exhibited a lower level of expression.

The protein resides in the cell membrane. Its function is as follows. Orphan receptor. The protein is Probable G-protein coupled receptor 151 (Gpr151) of Rattus norvegicus (Rat).